The chain runs to 370 residues: Glucan endo-1,3-beta-glucosidase, basic vacuolar isoform GLB (370 aa).

The N-terminal stretch at 1–32 (MSTSDKHNTPQMAAITLLGLLLVASTIEIAGA) is a signal peptide. Pyrrolidone carboxylic acid is present on Q33. Residue E128 is the Proton donor of the active site. The active-site Nucleophile is E273. Residues 349–370 (VSGGVWDSSVETNATASLISEM) constitute a propeptide, removed in mature form. Residue N361 is glycosylated (N-linked (GlcNAc...) asparagine).

The protein belongs to the glycosyl hydrolase 17 family. Is expressed primarily in epidermal cell of healthy plant, and following induction by ethylene, accumulates in mesophyll cells.

The protein localises to the vacuole. It carries out the reaction Hydrolysis of (1-&gt;3)-beta-D-glucosidic linkages in (1-&gt;3)-beta-D-glucans.. Functionally, implicated in the defense of plants against pathogens. This chain is Glucan endo-1,3-beta-glucosidase, basic vacuolar isoform GLB, found in Nicotiana tabacum (Common tobacco).